Reading from the N-terminus, the 421-residue chain is UDP-N-acetylglucosamine 1-carboxyvinyltransferase 2 (421 aa).

22 to 23 (KN) is a binding site for phosphoenolpyruvate. Arginine 94 is a binding site for UDP-N-acetyl-alpha-D-glucosamine. Cysteine 118 serves as the catalytic Proton donor. Position 118 is a 2-(S-cysteinyl)pyruvic acid O-phosphothioketal (cysteine 118). UDP-N-acetyl-alpha-D-glucosamine contacts are provided by aspartate 308 and isoleucine 330.

Belongs to the EPSP synthase family. MurA subfamily.

The protein localises to the cytoplasm. It carries out the reaction phosphoenolpyruvate + UDP-N-acetyl-alpha-D-glucosamine = UDP-N-acetyl-3-O-(1-carboxyvinyl)-alpha-D-glucosamine + phosphate. It participates in cell wall biogenesis; peptidoglycan biosynthesis. Cell wall formation. Adds enolpyruvyl to UDP-N-acetylglucosamine. This is UDP-N-acetylglucosamine 1-carboxyvinyltransferase 2 from Lactococcus lactis subsp. lactis (strain IL1403) (Streptococcus lactis).